A 234-amino-acid polypeptide reads, in one-letter code: UPF0502 protein Bphy_5360 (234 aa).

The protein belongs to the UPF0502 family.

In Paraburkholderia phymatum (strain DSM 17167 / CIP 108236 / LMG 21445 / STM815) (Burkholderia phymatum), this protein is UPF0502 protein Bphy_5360.